Reading from the N-terminus, the 438-residue chain is Xylose isomerase (438 aa).

Active-site residues include H100 and D103. The Mg(2+) site is built by E231, E267, H270, D295, D306, D308, and D338.

This sequence belongs to the xylose isomerase family. Homotetramer. Mg(2+) serves as cofactor.

Its subcellular location is the cytoplasm. The catalysed reaction is alpha-D-xylose = alpha-D-xylulofuranose. In Pseudomonas syringae pv. syringae (strain B728a), this protein is Xylose isomerase.